The chain runs to 501 residues: Cyclin-dependent kinase 19 (501 aa).

Met-1 bears the N-acetylmethionine mark. The Protein kinase domain occupies 21–335 (EYEGCKVGRG…SEQALQDPYF (315 aa)). Residues 27–35 (VGRGTYGHV) and Lys-52 contribute to the ATP site. Asp-151 functions as the Proton acceptor in the catalytic mechanism. The interval 362 to 501 (DEPEEKGDKN…YHSSHQTHRY (140 aa)) is disordered. Low complexity predominate over residues 371–392 (NQPQQQNPHQQPAAPAQQTAAP). Residues 408–421 (TAGGATAGGGGAGA) are compositionally biased toward gly residues. Position 449 is a phosphoserine (Ser-449). The segment covering 467–495 (YQSSVQGSSQSQSTLGYSSSQQSTQYHSS) has biased composition (low complexity).

It belongs to the protein kinase superfamily. CMGC Ser/Thr protein kinase family. CDC2/CDKX subfamily.

It is found in the cytoplasm. The protein resides in the perinuclear region. The protein localises to the nucleus. It carries out the reaction L-seryl-[protein] + ATP = O-phospho-L-seryl-[protein] + ADP + H(+). It catalyses the reaction L-threonyl-[protein] + ATP = O-phospho-L-threonyl-[protein] + ADP + H(+). The protein is Cyclin-dependent kinase 19 (Cdk19) of Mus musculus (Mouse).